Reading from the N-terminus, the 435-residue chain is MAAAYSTVGAVNRAPLSLNGSGARASLVPSTAFFGSSLKKSAAKFPKASSGNFKIVAQEISEDQQTDKDKWKGLAYDISDDQQDITRGKGMVDTLFQAPMQSGTHYAVMSSYDYISQGLRQYNLDNNMDGFYIAPAFMDKLVVHITKNFLSLPNIKIPLILGIWGGKGQGKSFQCELVFAKMGINPIMMSAGELESGNAGEPAKLIRQRYREAADIIKKGKMCCLFINDLDAGAGRMGGTTQYTVNNQMVNATLMNIADNPTNVQLPGMYNKEENPRVPIIVTGNDFSTLYAPLIRDGRMEKFYWAPTREDRIGVCKGIFRTDNVPEEDIVKVVDQFPGQSIDFFGALRARVYDDEVRKWVSEVGVDTIGKKLVNSKEGPPTFEQPKMTIDKLLQYGNMLVEEQENVKRVQLADKYMSEAALGDANQDAIKRGTF.

The N-terminal 56 residues, 1–56, are a transit peptide targeting the chloroplast; sequence MAAAYSTVGAVNRAPLSLNGSGARASLVPSTAFFGSSLKKSAAKFPKASSGNFKIV. Residue 165–172 participates in ATP binding; that stretch reads GGKGQGKS.

Belongs to the RuBisCO activase family.

The protein localises to the plastid. Its subcellular location is the chloroplast stroma. Functionally, activation of RuBisCO (ribulose-1,5-bisphosphate carboxylase/oxygenase; EC 4.1.1.39) involves the ATP-dependent carboxylation of the epsilon-amino group of lysine leading to a carbamate structure. This chain is Ribulose bisphosphate carboxylase/oxygenase activase 2, chloroplastic (RCA2), found in Larrea tridentata (Creosote bush).